Here is a 525-residue protein sequence, read N- to C-terminus: Lysine--tRNA ligase (525 aa).

The 'HIGH' region signature appears at Pro-44 to Thr-52. A 'KMSKS' region motif is present at residues Lys-290–Ser-294. Residue Lys-293 participates in ATP binding.

Belongs to the class-I aminoacyl-tRNA synthetase family.

The protein localises to the cytoplasm. It catalyses the reaction tRNA(Lys) + L-lysine + ATP = L-lysyl-tRNA(Lys) + AMP + diphosphate. In Rickettsia felis (strain ATCC VR-1525 / URRWXCal2) (Rickettsia azadi), this protein is Lysine--tRNA ligase.